The following is a 349-amino-acid chain: Magnesium-protoporphyrin IX monomethyl ester [oxidative] cyclase (349 aa).

Over residues 1–10 the composition is skewed to low complexity; sequence MTATTATAPT. The tract at residues 1-23 is disordered; sequence MTATTATAPTMRGGGRNELPPHL.

Belongs to the AcsF family. Requires Fe cation as cofactor.

It carries out the reaction Mg-protoporphyrin IX 13-monomethyl ester + 3 NADPH + 3 O2 + 2 H(+) = 3,8-divinyl protochlorophyllide a + 3 NADP(+) + 5 H2O. The protein operates within porphyrin-containing compound metabolism; chlorophyll biosynthesis (light-independent). In terms of biological role, catalyzes the formation of the isocyclic ring in chlorophyll biosynthesis. Mediates the cyclase reaction, which results in the formation of divinylprotochlorophyllide (Pchlide) characteristic of all chlorophylls from magnesium-protoporphyrin IX 13-monomethyl ester (MgPMME). This Prochlorococcus marinus (strain MIT 9313) protein is Magnesium-protoporphyrin IX monomethyl ester [oxidative] cyclase.